The primary structure comprises 1203 residues: DNA-directed RNA polymerase subunit beta' (1203 aa).

Zn(2+) is bound by residues Cys-60, Cys-62, Cys-75, and Cys-78. Asp-449, Asp-451, and Asp-453 together coordinate Mg(2+). Zn(2+)-binding residues include Cys-818, Cys-892, Cys-899, and Cys-902.

It belongs to the RNA polymerase beta' chain family. The RNAP catalytic core consists of 2 alpha, 1 beta, 1 beta' and 1 omega subunit. When a sigma factor is associated with the core the holoenzyme is formed, which can initiate transcription. Requires Mg(2+) as cofactor. It depends on Zn(2+) as a cofactor.

It catalyses the reaction RNA(n) + a ribonucleoside 5'-triphosphate = RNA(n+1) + diphosphate. Its function is as follows. DNA-dependent RNA polymerase catalyzes the transcription of DNA into RNA using the four ribonucleoside triphosphates as substrates. The sequence is that of DNA-directed RNA polymerase subunit beta' from Bacillus cereus (strain ATCC 14579 / DSM 31 / CCUG 7414 / JCM 2152 / NBRC 15305 / NCIMB 9373 / NCTC 2599 / NRRL B-3711).